The following is a 93-amino-acid chain: Co-chaperonin GroES (93 aa).

This sequence belongs to the GroES chaperonin family. As to quaternary structure, heptamer of 7 subunits arranged in a ring. Interacts with the chaperonin GroEL.

The protein resides in the cytoplasm. Together with the chaperonin GroEL, plays an essential role in assisting protein folding. The GroEL-GroES system forms a nano-cage that allows encapsulation of the non-native substrate proteins and provides a physical environment optimized to promote and accelerate protein folding. GroES binds to the apical surface of the GroEL ring, thereby capping the opening of the GroEL channel. The polypeptide is Co-chaperonin GroES (Streptococcus gordonii (strain Challis / ATCC 35105 / BCRC 15272 / CH1 / DL1 / V288)).